We begin with the raw amino-acid sequence, 75 residues long: MSGCNCGSSCNCGDSCKCNKRSSGLSYSEVETKETVILGVGPAKIQFEGAEMSFASKEGGCKCGDNCTCDPCNCK.

The protein belongs to the metallothionein superfamily. Type 15 family.

Functionally, metallothioneins have a high content of cysteine residues that bind various heavy metals. The sequence is that of Metallothionein-like protein 1B (MT1B) from Vicia faba (Broad bean).